Reading from the N-terminus, the 744-residue chain is Spalt-like protein sem-4 (744 aa).

Positions 6-32 (AEMAAVSSRRKQSKPRRMSGEGDAMMS) are disordered. The span at 13-22 (SRRKQSKPRR) shows a compositional bias: basic residues. 4 consecutive C2H2-type zinc fingers follow at residues 99-124 (SSCP…LDAH), 305-327 (NQCI…YRTH), 333-355 (FKCK…MGVH), and 411-433 (QQCP…ITEH). Residues 487-497 (KNDSSPNTDTS) show a composition bias toward polar residues. 2 disordered regions span residues 487 to 530 (KNDS…RQDI) and 542 to 562 (KLEE…PKNE). Residues 499–509 (VEEKITRDDPP) show a composition bias toward basic and acidic residues. A compositionally biased stretch (low complexity) spans 513–525 (SLSPSNSSDSSSS). Over residues 551-561 (QQVSTTPNPKN) the composition is skewed to polar residues. 3 C2H2-type zinc fingers span residues 589–611 (HQCG…MRTH), 617–639 (FKCD…MGTH), and 701–723 (TVCS…LKEH). The tract at residues 725–744 (NNGSSAAPTPLASAATPPPS) is disordered. The span at 728–744 (SSAAPTPLASAATPPPS) shows a compositional bias: low complexity.

It belongs to the sal C2H2-type zinc-finger protein family.

Its subcellular location is the nucleus. Transcription factor, involved in positive and negative modulation of transcription. Binds to multiple DNA sequence motifs in the regulatory elements of target genes, including homeobox selector egl-5 and LIM homeobox mec-3. Involved in cell-fate regulation in multiple lineages, including neuronal, mesodermal and vulval. Required to regulate the fate of PLM touch receptor neurons, acting via negative modulation of transcription of egl-5 and mec-3. May modulate gene expression by interacting with different transcription factors during neuronal and mesodermal cell development. Promotes the proliferative sex myoblast (SM) fate, in a cell autonomous manner, acting via the SoxC transcription factor sem-2. Involved in vulval cell-fate determination, acting by regulating expression of homeobox protein lin-39, and may link lin-39 to incoming signaling pathways. Plays a role in detoxification of reactive oxygen species (ROS), by regulating expression of transcription factor skn-1 and the phase II detoxification genes. The sequence is that of Spalt-like protein sem-4 from Caenorhabditis elegans.